The following is a 252-amino-acid chain: Thiazole synthase (252 aa).

The active-site Schiff-base intermediate with DXP is K98. 1-deoxy-D-xylulose 5-phosphate contacts are provided by residues G159, 185–186, and 207–208; these read AG and AT.

Belongs to the ThiG family. Homotetramer. Forms heterodimers with either ThiH or ThiS.

Its subcellular location is the cytoplasm. It catalyses the reaction [ThiS sulfur-carrier protein]-C-terminal-Gly-aminoethanethioate + 2-iminoacetate + 1-deoxy-D-xylulose 5-phosphate = [ThiS sulfur-carrier protein]-C-terminal Gly-Gly + 2-[(2R,5Z)-2-carboxy-4-methylthiazol-5(2H)-ylidene]ethyl phosphate + 2 H2O + H(+). Its pathway is cofactor biosynthesis; thiamine diphosphate biosynthesis. Catalyzes the rearrangement of 1-deoxy-D-xylulose 5-phosphate (DXP) to produce the thiazole phosphate moiety of thiamine. Sulfur is provided by the thiocarboxylate moiety of the carrier protein ThiS. In vitro, sulfur can be provided by H(2)S. The chain is Thiazole synthase from Mycobacterium avium (strain 104).